Reading from the N-terminus, the 809-residue chain is Pentatricopeptide repeat-containing protein At1g11290, chloroplastic (809 aa).

A chloroplast-targeting transit peptide spans 1–46; it reads MSSQLVQFSTVPQIPNPPSRHRHFLSERNYIPANVYEHPAALLLER. 16 PPR repeats span residues 68 to 98, 99 to 133, 134 to 168, 169 to 199, 200 to 234, 235 to 269, 270 to 300, 301 to 335, 336 to 370, 371 to 401, 402 to 436, 437 to 471, 472 to 502, 503 to 537, 538 to 568, and 574 to 604; these read EHFFQTKLVSLFCRYGSVDEAARVFEPIDSK, LNVLYHTMLKGFAKVSDLDKALQFFVRMRYDDVEP, VVYNFTYLLKVCGDEAELRVGKEIHGLLVKSGFSL, DLFAMTGLENMYAKCRQVNEARKVFDRMPER, DLVSWNTIVAGYSQNGMARMALEMVKSMCEENLKP, SFITIVSVLPAVSALRLISVGKEIHGYAMRSGFDS, LVNISTALVDMYAKCGSLETARQLFDGMLER, NVVSWNSMIDAYVQNENPKEAMLIFQKMLDEGVKP, TDVSVMGALHACADLGDLERGRFIHKLSVELGLDR, NVSVVNSLISMYCKCKEVDTAASMFGKLQSR, TLVSWNAMILGFAQNGRPIDALNYFSQMRSRTVKP, DTFTYVSVITAIAELSITHHAKWIHGVVMRSCLDK, NVFVTTALVDMYAKCGAIMIARLIFDMMSER, HVTTWNAMIDGYGTHGFGKAALELFEEMQKGTIKP, NGVTFLSVISACSHSGLVEAGLKCFYMMKEN, and SMDHYGAMVDLLGRAGRLNEAWDFIMQMPVK. The tract at residues 609-684 is type E motif; it reads VYGAMLGACQ…TPGCSMVEIK (76 aa). Positions 685-715 are type E(+) motif; it reads NEVHSFFSGSTAHPDSKKIYAFLEKLICHIK. The type DYW motif stretch occupies residues 716 to 809; sequence EAGYVPDTNL…NGACSCGDYW (94 aa).

It belongs to the PPR family. PCMP-H subfamily.

It localises to the plastid. The protein resides in the chloroplast. Its function is as follows. Involved in multiple sites RNA editing events in chloroplasts. Involved in the editing of the site 7 of ndhB (ndhB-7) and site 5 of ndhD (ndhD-5) transcripts, which are two plastid-encoded subunits of the chloroplast NAD(P)H dehydrogenase (NDH) complex. Involved in the editing of the site 3 of rpoB (rpoB-3) transcript. Required for the activity of the NDH complex of the photosynthetic electron transport chain. Possesses low endoribonuclease activity in vitro. In Arabidopsis thaliana (Mouse-ear cress), this protein is Pentatricopeptide repeat-containing protein At1g11290, chloroplastic (PCMP-H40).